Consider the following 242-residue polypeptide: Mitochondrial intermembrane space import and assembly protein 40 (242 aa).

The N-terminal 18 residues, 1-18 (MFARSFSNASRTIARRSL), are a transit peptide targeting the mitochondrion. The span at 1-22 (MFARSFSNASRTIARRSLSTRS) shows a compositional bias: polar residues. The disordered stretch occupies residues 1 to 30 (MFARSFSNASRTIARRSLSTRSGPAPSSLW). Over 19-34 (STRSGPAPSSLWSSRN) the chain is Mitochondrial matrix. The helical; Signal-anchor for type II membrane protein transmembrane segment at 35–51 (AVIAGTTLAITALAVTS) threads the bilayer. Topologically, residues 52 to 242 (ERRKVFNESA…EETAAPAAAP (191 aa)) are mitochondrial intermembrane. The segment at 58–111 (NESAQKATSPRDSIIAQDSLKENVHKKSVRQDEFSGESTKPEASTSSDSVEKAA) is disordered. A compositionally biased stretch (polar residues) spans 59-68 (ESAQKATSPR). Residues 76 to 90 (SLKENVHKKSVRQDE) are compositionally biased toward basic and acidic residues. Polar residues predominate over residues 93 to 105 (GESTKPEASTSSD). 3 disulfides stabilise this stretch: C144/C146, C155/C188, and C165/C178. A CHCH domain is found at 152-196 (TGPCGEQFKAAFSCFVYSEAEPKGVDCVELFKVMQDCFREHPEIY). Short sequence motifs (cx9C motif) lie at residues 155 to 165 (CGEQFKAAFSC) and 178 to 188 (CVELFKVMQDC). Positions 215-242 (DEAPPQEGTMEEKVEAAKEETAAPAAAP) are disordered. Residues 224-235 (MEEKVEAAKEET) are compositionally biased toward basic and acidic residues.

As to quaternary structure, monomer. Cu(2+) is required as a cofactor. Requires Zn(2+) as cofactor.

It is found in the mitochondrion inner membrane. In terms of biological role, required for the import and folding of small cysteine-containing proteins (small Tim) in the mitochondrial intermembrane space (IMS). Forms a redox cycle with ERV1 that involves a disulfide relay system. Precursor proteins to be imported into the IMS are translocated in their reduced form into the mitochondria. The oxidized form of MIA40 forms a transient intermolecular disulfide bridge with the reduced precursor protein, resulting in oxidation of the precursor protein that now contains an intramolecular disulfide bond and is able to undergo folding in the IMS. This chain is Mitochondrial intermembrane space import and assembly protein 40 (MIA40), found in Cryptococcus neoformans var. neoformans serotype D (strain B-3501A) (Filobasidiella neoformans).